Here is a 170-residue protein sequence, read N- to C-terminus: Putative 4-hydroxy-4-methyl-2-oxoglutarate aldolase (170 aa).

Residues 81-84 (GDII) and R103 contribute to the substrate site. D104 provides a ligand contact to a divalent metal cation.

It belongs to the class II aldolase/RraA-like family. Homotrimer. A divalent metal cation is required as a cofactor.

It catalyses the reaction 4-hydroxy-4-methyl-2-oxoglutarate = 2 pyruvate. The catalysed reaction is oxaloacetate + H(+) = pyruvate + CO2. In terms of biological role, catalyzes the aldol cleavage of 4-hydroxy-4-methyl-2-oxoglutarate (HMG) into 2 molecules of pyruvate. Also contains a secondary oxaloacetate (OAA) decarboxylase activity due to the common pyruvate enolate transition state formed following C-C bond cleavage in the retro-aldol and decarboxylation reactions. This is Putative 4-hydroxy-4-methyl-2-oxoglutarate aldolase from Corynebacterium efficiens (strain DSM 44549 / YS-314 / AJ 12310 / JCM 11189 / NBRC 100395).